We begin with the raw amino-acid sequence, 462 residues long: Siroheme synthase (462 aa).

Positions 1-203 are precorrin-2 dehydrogenase /sirohydrochlorin ferrochelatase; the sequence is MEYLPLFANL…GKWEHAEKEI (203 aa). NAD(+) contacts are provided by residues 22-23 and 43-44; these read NV and DD. Ser128 carries the post-translational modification Phosphoserine. The tract at residues 215–462 is uroporphyrinogen-III C-methyltransferase; it reads GNVALVGAGP…NWFGKIIKEQ (248 aa). Pro224 is a binding site for S-adenosyl-L-methionine. The active-site Proton acceptor is the Asp247. The active-site Proton donor is the Lys269. S-adenosyl-L-methionine contacts are provided by residues 300 to 302, Ile305, 330 to 331, Met383, and Gly412; these read GGD and TA.

The protein in the N-terminal section; belongs to the precorrin-2 dehydrogenase / sirohydrochlorin ferrochelatase family. It in the C-terminal section; belongs to the precorrin methyltransferase family.

The enzyme catalyses uroporphyrinogen III + 2 S-adenosyl-L-methionine = precorrin-2 + 2 S-adenosyl-L-homocysteine + H(+). The catalysed reaction is precorrin-2 + NAD(+) = sirohydrochlorin + NADH + 2 H(+). It carries out the reaction siroheme + 2 H(+) = sirohydrochlorin + Fe(2+). Its pathway is cofactor biosynthesis; adenosylcobalamin biosynthesis; precorrin-2 from uroporphyrinogen III: step 1/1. It functions in the pathway cofactor biosynthesis; adenosylcobalamin biosynthesis; sirohydrochlorin from precorrin-2: step 1/1. The protein operates within porphyrin-containing compound metabolism; siroheme biosynthesis; precorrin-2 from uroporphyrinogen III: step 1/1. It participates in porphyrin-containing compound metabolism; siroheme biosynthesis; siroheme from sirohydrochlorin: step 1/1. Its pathway is porphyrin-containing compound metabolism; siroheme biosynthesis; sirohydrochlorin from precorrin-2: step 1/1. Functionally, multifunctional enzyme that catalyzes the SAM-dependent methylations of uroporphyrinogen III at position C-2 and C-7 to form precorrin-2 via precorrin-1. Then it catalyzes the NAD-dependent ring dehydrogenation of precorrin-2 to yield sirohydrochlorin. Finally, it catalyzes the ferrochelation of sirohydrochlorin to yield siroheme. In Baumannia cicadellinicola subsp. Homalodisca coagulata, this protein is Siroheme synthase.